We begin with the raw amino-acid sequence, 854 residues long: DNA mismatch repair protein MutS (854 aa).

Residue 616 to 623 participates in ATP binding; sequence GPNMGGKS.

It belongs to the DNA mismatch repair MutS family.

In terms of biological role, this protein is involved in the repair of mismatches in DNA. It is possible that it carries out the mismatch recognition step. This protein has a weak ATPase activity. The chain is DNA mismatch repair protein MutS from Pectobacterium atrosepticum (strain SCRI 1043 / ATCC BAA-672) (Erwinia carotovora subsp. atroseptica).